A 506-amino-acid polypeptide reads, in one-letter code: UDP-N-acetylmuramoyl-L-alanyl-D-glutamate--2,6-diaminopimelate ligase (506 aa).

UDP-N-acetyl-alpha-D-muramoyl-L-alanyl-D-glutamate is bound at residue Ser38. Position 124-130 (124-130 (GTNGKTS)) interacts with ATP. UDP-N-acetyl-alpha-D-muramoyl-L-alanyl-D-glutamate-binding positions include 166–167 (TT), Ser193, and Arg201. Position 233 is an N6-carboxylysine (Lys233). Meso-2,6-diaminopimelate is bound by residues Arg401, 425–428 (DNPR), Gly477, and Glu481. The Meso-diaminopimelate recognition motif motif lies at 425–428 (DNPR).

This sequence belongs to the MurCDEF family. MurE subfamily. Mg(2+) serves as cofactor. In terms of processing, carboxylation is probably crucial for Mg(2+) binding and, consequently, for the gamma-phosphate positioning of ATP.

The protein resides in the cytoplasm. It catalyses the reaction UDP-N-acetyl-alpha-D-muramoyl-L-alanyl-D-glutamate + meso-2,6-diaminopimelate + ATP = UDP-N-acetyl-alpha-D-muramoyl-L-alanyl-gamma-D-glutamyl-meso-2,6-diaminopimelate + ADP + phosphate + H(+). It functions in the pathway cell wall biogenesis; peptidoglycan biosynthesis. Catalyzes the addition of meso-diaminopimelic acid to the nucleotide precursor UDP-N-acetylmuramoyl-L-alanyl-D-glutamate (UMAG) in the biosynthesis of bacterial cell-wall peptidoglycan. The protein is UDP-N-acetylmuramoyl-L-alanyl-D-glutamate--2,6-diaminopimelate ligase of Leptospira interrogans serogroup Icterohaemorrhagiae serovar copenhageni (strain Fiocruz L1-130).